A 514-amino-acid chain; its full sequence is Transmembrane protein 117 (514 aa).

The Cytoplasmic portion of the chain corresponds to 1–15 (MGKDFRYYFQHPWSR). The helical transmembrane segment at 16 to 36 (MIVAYLVIFFNFLIFAEDPVS) threads the bilayer. Residues 37–65 (HSQTEANVIVVGNCFSFVTNKYPRGVGWR) lie on the Extracellular side of the membrane. A helical transmembrane segment spans residues 66–86 (ILKVLLWLLAILIGLIAGKFL). Topologically, residues 87-110 (FHQRLFGQLLRLKMFREDHGSWMT) are cytoplasmic. Residues 111-131 (MFFSTILFLFIFSHIYNTILL) traverse the membrane as a helical segment. At 132–154 (MDGNMGAYLITDYMGIRNESFMK) the chain is on the extracellular side. A helical transmembrane segment spans residues 155-175 (LAAVGTWMGDFVTAWMVTDMM). Residues 176–198 (LQDKPYPDWGKSARAFWKKGNVR) lie on the Cytoplasmic side of the membrane. The helical transmembrane segment at 199 to 219 (IILFWTVLFTLTSVVVLVITT) threads the bilayer. Topologically, residues 220–239 (DWISWDKLNRGFLPSDEVSR) are extracellular. The chain crosses the membrane as a helical span at residues 240 to 260 (AFLASFILVFDLLIVMQDWEF). Residues 261-295 (PHFMGDVDVNLPGLHTPHMQFKIPFFQKIFKEEYR) lie on the Cytoplasmic side of the membrane. Residues 296–316 (IHITGKWFNYGIIFLVLILDL) form a helical membrane-spanning segment. Topologically, residues 317 to 394 (NMWKNQIFYK…FIGASLDVKC (78 aa)) are extracellular. N-linked (GlcNAc...) asparagine glycans are attached at residues N353 and N371. The chain crosses the membrane as a helical span at residues 395–415 (LAFVPSLIAFVWFGFFIWFFG). Residues 416-514 (RFLKNEQGME…PAASQRMRTN (99 aa)) are Cytoplasmic-facing. The tract at residues 430-450 (TYTRMKRKSPSEHSKDMGITR) is disordered. Residues 438 to 448 (SPSEHSKDMGI) show a composition bias toward basic and acidic residues. Position 453 is a phosphothreonine (T453). Residues 494–514 (ESTSEVEAEQEPAASQRMRTN) form a disordered region.

Belongs to the TMEM117 family.

The protein localises to the cell membrane. Functionally, involved in endoplasmic reticulum (ER) stress-induced cell death pathway. The sequence is that of Transmembrane protein 117 (Tmem117) from Mus musculus (Mouse).